Reading from the N-terminus, the 308-residue chain is Ribonuclease HIII (308 aa).

An RNase H type-2 domain is found at 88 to 304; it reads FHCIGSDEAG…RDKAIHLMNQ (217 aa). 3 residues coordinate a divalent metal cation: aspartate 94, glutamate 95, and aspartate 199.

It belongs to the RNase HII family. RnhC subfamily. Requires Mn(2+) as cofactor. It depends on Mg(2+) as a cofactor.

Its subcellular location is the cytoplasm. It catalyses the reaction Endonucleolytic cleavage to 5'-phosphomonoester.. Endonuclease that specifically degrades the RNA of RNA-DNA hybrids. The polypeptide is Ribonuclease HIII (Staphylococcus epidermidis (strain ATCC 12228 / FDA PCI 1200)).